The following is a 329-amino-acid chain: Chlorophyllase-1, chloroplastic (329 aa).

The transit peptide at Met1–Thr21 directs the protein to the chloroplast. The short motif at Gly145 to Gly149 is the GXSXG element. The active-site Nucleophile is Ser147. Active-site charge relay system residues include Asp169 and His242.

Belongs to the AB hydrolase superfamily. Lipase family.

The protein resides in the plastid. It is found in the chloroplast. It catalyses the reaction a chlorophyll + H2O = a chlorophyllide + phytol + H(+). The protein operates within porphyrin-containing compound metabolism; chlorophyll degradation. Its function is as follows. Catalyzes the hydrolysis of ester bond in chlorophyll to yield chlorophyllide and phytol. The sequence is that of Chlorophyllase-1, chloroplastic (CHLASE1) from Citrus sinensis (Sweet orange).